Reading from the N-terminus, the 608-residue chain is Protein FAM151A (608 aa).

A helical membrane pass occupies residues 14-34; that stretch reads WILAGSVSMTLVLAISMILGL. Residues 588–608 form a disordered region; that stretch reads RHRPSSRTGPSYVEGFPGESR.

This sequence belongs to the menorin family.

It is found in the membrane. This Rattus norvegicus (Rat) protein is Protein FAM151A (Fam151a).